A 402-amino-acid chain; its full sequence is CinA-like protein (402 aa).

It belongs to the CinA family.

This Escherichia coli O17:K52:H18 (strain UMN026 / ExPEC) protein is CinA-like protein.